Consider the following 684-residue polypeptide: Agnestins biosynthesis cluster transcription factor AgnL11 (684 aa).

A DNA-binding region (zn(2)-C6 fungal-type) is located at residues 25 to 51 (CHFCRTKKLKCDRRFPCSNCRARRLSC). The stretch at 76–103 (NEELSENINELKARLQRLEELISVNAEE) forms a coiled coil. Positions 601–644 (KGSASARKDKNPIHGDTDRATPPGSSNLPQHDKSSSSSPAPPVW) are disordered. Positions 606-619 (ARKDKNPIHGDTDR) are enriched in basic and acidic residues.

It localises to the nucleus. Functionally, transcription factor that regulates the expression of the gene cluster that mediates the biosynthesis of agnestins, dihydroxy-xanthone metabolites. In Paecilomyces divaricatus (Penicillium divaricatum), this protein is Agnestins biosynthesis cluster transcription factor AgnL11.